The primary structure comprises 112 residues: Nitrogen regulatory protein P-II (112 aa).

Y51 carries the post-translational modification O-UMP-tyrosine.

This sequence belongs to the P(II) protein family. In terms of assembly, homotrimer.

Functionally, P-II indirectly controls the transcription of the glutamine synthetase gene (glnA). P-II prevents NR-II-catalyzed conversion of NR-I to NR-I-phosphate, the transcriptional activator of glnA. When P-II is uridylylated to P-II-UMP, these events are reversed. When the ratio of Gln to 2-ketoglutarate decreases, P-II is uridylylated to P-II-UMP, which causes the deadenylation of glutamine synthetase, so activating the enzyme. The polypeptide is Nitrogen regulatory protein P-II (glnB) (Rhodobacter capsulatus (Rhodopseudomonas capsulata)).